A 515-amino-acid chain; its full sequence is 2-isopropylmalate synthase (515 aa).

Residues 4-266 enclose the Pyruvate carboxyltransferase domain; that stretch reads ISVFDTTLRD…ETGLILKEIK (263 aa). Mn(2+) contacts are provided by Asp13, His201, His203, and Asn237. A regulatory domain region spans residues 391–515; it reads ELQTLQVNYG…AEVYGSKVEV (125 aa).

This sequence belongs to the alpha-IPM synthase/homocitrate synthase family. LeuA type 1 subfamily. In terms of assembly, homodimer. Mn(2+) serves as cofactor.

It is found in the cytoplasm. It catalyses the reaction 3-methyl-2-oxobutanoate + acetyl-CoA + H2O = (2S)-2-isopropylmalate + CoA + H(+). It participates in amino-acid biosynthesis; L-leucine biosynthesis; L-leucine from 3-methyl-2-oxobutanoate: step 1/4. Catalyzes the condensation of the acetyl group of acetyl-CoA with 3-methyl-2-oxobutanoate (2-ketoisovalerate) to form 3-carboxy-3-hydroxy-4-methylpentanoate (2-isopropylmalate). The chain is 2-isopropylmalate synthase from Halalkalibacterium halodurans (strain ATCC BAA-125 / DSM 18197 / FERM 7344 / JCM 9153 / C-125) (Bacillus halodurans).